A 204-amino-acid polypeptide reads, in one-letter code: INSIG protein homolog (204 aa).

5 helical membrane passes run 5 to 27 (ISEA…HSHV), 47 to 64 (FWFP…AELR), 76 to 97 (ARQA…ALVH), 101 to 118 (VVPV…TWCV), and 124 to 145 (GAAC…LVQL). H26 provides a ligand contact to a 1,2-diacyl-sn-glycerol. Y150 lines the a 1,2-diacyl-sn-glycerol pocket. A helical transmembrane segment spans residues 162-179 (PFLAPLYFAFGVVAALLG).

This sequence belongs to the INSIG family. Homotrimer.

Its subcellular location is the membrane. Functionally, diacylglycerol-binding protein. The protein is INSIG protein homolog of Mycolicibacterium vanbaalenii (strain DSM 7251 / JCM 13017 / BCRC 16820 / KCTC 9966 / NRRL B-24157 / PYR-1) (Mycobacterium vanbaalenii).